Reading from the N-terminus, the 185-residue chain is Thioredoxin F2, chloroplastic (185 aa).

One can recognise a Thioredoxin domain in the interval 59–184; sequence RRIGSCVVRC…LLAAIEAARS (126 aa). Catalysis depends on nucleophile residues cysteine 109 and cysteine 112. Cysteine 109 and cysteine 112 are oxidised to a cystine. S-glutathionyl cysteine; transient is present on cysteine 136.

It belongs to the thioredoxin family. Plant F-type subfamily. In terms of processing, glutathionylation at Cys-136 decreases its ability to be reduced by ferredoxin-thioredoxin reductase and reduces its efficiency in activating target chloroplastic enzymes.

The protein resides in the plastid. The protein localises to the chloroplast stroma. Its function is as follows. Probable thiol-disulfide oxidoreductase involved in the redox regulation of enzymes of both reductive pentose phosphate pathway (Calvin-Benson cycle) and oxidative pentose phosphate pathway. The sequence is that of Thioredoxin F2, chloroplastic from Arabidopsis thaliana (Mouse-ear cress).